The primary structure comprises 646 residues: Long-chain fatty acid transport protein 1 (646 aa).

Over 1-13 the chain is Extracellular; it reads MRAPGAGSASVAS. Residues 14 to 34 form a helical membrane-spanning segment; the sequence is LVLLWLLGLPWTWSTAAALGV. The Cytoplasmic segment spans residues 35–646; sequence YVGGGGWRFL…TRICSGAFAL (612 aa). Residues 191–475 are sufficient for oligomerization; sequence EMSGELGKSL…YISESATSKK (285 aa). 246–257 contacts AMP; sequence YIYTSGTTGLPK.

It belongs to the ATP-dependent AMP-binding enzyme family. Self-associates. May function as a homodimer. Interacts with EPRS1; mediates the translocation of SLC27A1 from the cytoplasm to the plasma membrane thereby increasing the uptake of long-chain fatty acids. Interacts with DGAT2 and this interaction is enhanced in the presence of ZFYVE1.

Its subcellular location is the cell membrane. It localises to the endomembrane system. It is found in the cytoplasm. It carries out the reaction a fatty acid(in) = a fatty acid(out). The catalysed reaction is (9Z)-octadecenoate(out) = (9Z)-octadecenoate(in). The enzyme catalyses hexadecanoate(out) = hexadecanoate(in). It catalyses the reaction (5Z,8Z,11Z,14Z)-eicosatetraenoate(out) = (5Z,8Z,11Z,14Z)-eicosatetraenoate(in). It carries out the reaction (9Z,12Z)-octadecadienoate(out) = (9Z,12Z)-octadecadienoate(in). The catalysed reaction is a long-chain fatty acid + ATP + CoA = a long-chain fatty acyl-CoA + AMP + diphosphate. The enzyme catalyses (5Z,8Z,11Z,14Z)-eicosatetraenoate + ATP + CoA = (5Z,8Z,11Z,14Z)-eicosatetraenoyl-CoA + AMP + diphosphate. It catalyses the reaction a very long-chain fatty acid + ATP + CoA = a very long-chain fatty acyl-CoA + AMP + diphosphate. It carries out the reaction tetracosanoate + ATP + CoA = tetracosanoyl-CoA + AMP + diphosphate. With respect to regulation, inhibited by Triacsin C. Its function is as follows. Mediates the import of long-chain fatty acids (LCFA) into the cell by facilitating their transport at the plasma membrane. Also functions as an acyl-CoA ligase catalyzing the ATP-dependent formation of fatty acyl-CoA using LCFA and very-long-chain fatty acids (VLCFA) as substrates, which prevents fatty acid efflux from cells and might drive more fatty acid uptake. May act directly as a bona fide transporter, or alternatively, in a cytoplasmic or membrane-associated multimeric protein complex to trap and draw fatty acids towards accumulation. Plays a pivotal role in regulating available LCFA substrates from exogenous sources in tissues undergoing high levels of beta-oxidation or triglyceride synthesis. May be involved in regulation of cholesterol metabolism. Probably involved in fatty acid transport across the blood barrier. In Bos taurus (Bovine), this protein is Long-chain fatty acid transport protein 1.